Reading from the N-terminus, the 229-residue chain is ATP-dependent Clp protease proteolytic subunit (229 aa).

Catalysis depends on S101, which acts as the Nucleophile. Residue H126 is part of the active site.

This sequence belongs to the peptidase S14 family. Component of the chloroplastic Clp protease core complex.

It is found in the plastid. It localises to the chloroplast stroma. It carries out the reaction Hydrolysis of proteins to small peptides in the presence of ATP and magnesium. alpha-casein is the usual test substrate. In the absence of ATP, only oligopeptides shorter than five residues are hydrolyzed (such as succinyl-Leu-Tyr-|-NHMec, and Leu-Tyr-Leu-|-Tyr-Trp, in which cleavage of the -Tyr-|-Leu- and -Tyr-|-Trp bonds also occurs).. In terms of biological role, cleaves peptides in various proteins in a process that requires ATP hydrolysis. Has a chymotrypsin-like activity. Plays a major role in the degradation of misfolded proteins. The protein is ATP-dependent Clp protease proteolytic subunit of Mesostigma viride (Green alga).